Consider the following 636-residue polypeptide: 1-deoxy-D-xylulose-5-phosphate synthase (636 aa).

Residues histidine 73 and 114-116 (SHA) each bind thiamine diphosphate. Aspartate 146 contributes to the Mg(2+) binding site. Thiamine diphosphate-binding positions include 147-148 (GA), asparagine 176, tyrosine 287, and glutamate 368. Residue asparagine 176 coordinates Mg(2+).

Belongs to the transketolase family. DXPS subfamily. In terms of assembly, homodimer. Mg(2+) is required as a cofactor. Requires thiamine diphosphate as cofactor.

It catalyses the reaction D-glyceraldehyde 3-phosphate + pyruvate + H(+) = 1-deoxy-D-xylulose 5-phosphate + CO2. Its pathway is metabolic intermediate biosynthesis; 1-deoxy-D-xylulose 5-phosphate biosynthesis; 1-deoxy-D-xylulose 5-phosphate from D-glyceraldehyde 3-phosphate and pyruvate: step 1/1. Catalyzes the acyloin condensation reaction between C atoms 2 and 3 of pyruvate and glyceraldehyde 3-phosphate to yield 1-deoxy-D-xylulose-5-phosphate (DXP). The sequence is that of 1-deoxy-D-xylulose-5-phosphate synthase from Corynebacterium glutamicum (strain ATCC 13032 / DSM 20300 / JCM 1318 / BCRC 11384 / CCUG 27702 / LMG 3730 / NBRC 12168 / NCIMB 10025 / NRRL B-2784 / 534).